A 213-amino-acid polypeptide reads, in one-letter code: MRKHQLPILPLLRDDLPLDTVELARFMIGKYLVHDLPEGRMSGRIVETEAYPLGDSTSHAFMGRRPHNGSMFLAPGHAYVRLTYGLSYMLNMSAEAEEVGAGILLRAIEPLEGLPLIEARRPGVPLRDLARGPGRLTMAFGVGPSFDGWDLCSGQGLWIGVIERGEVPVGVTTRIGLSREMHQPLRFFEPGSAFVSGPRKLLVTPQSGAPKRA.

The protein belongs to the DNA glycosylase MPG family.

This is Putative 3-methyladenine DNA glycosylase from Paraburkholderia phytofirmans (strain DSM 17436 / LMG 22146 / PsJN) (Burkholderia phytofirmans).